A 267-amino-acid chain; its full sequence is NLP effector protein 6 (267 aa).

The first 35 residues, 1 to 35 (MRTTSPYSHCSHVEMNAGAFVTMLLVALSVCVAAA), serve as a signal peptide directing secretion. The N-linked (GlcNAc...) asparagine glycan is linked to N114. Residues 117–127 (AIMYAWYFPKR) carry the Conserved undecapeptide motif motif. The short motif at 134 to 140 (IQRHDWK) is the Conserved heptapeptide motif element. An N-linked (GlcNAc...) asparagine glycan is attached at N192.

Belongs to the Necrosis inducing protein (NPP1) family.

Its subcellular location is the secreted. Its function is as follows. Probable secreted effector that may act as a pathogen-associated molecular pattern (PAMP) recognized by the plant immune system. In Plasmopara viticola (Downy mildew of grapevine), this protein is NLP effector protein 6.